Here is a 93-residue protein sequence, read N- to C-terminus: Small ribosomal subunit protein uS19 (93 aa).

It belongs to the universal ribosomal protein uS19 family.

In terms of biological role, protein S19 forms a complex with S13 that binds strongly to the 16S ribosomal RNA. The protein is Small ribosomal subunit protein uS19 of Streptococcus gordonii (strain Challis / ATCC 35105 / BCRC 15272 / CH1 / DL1 / V288).